The following is a 137-amino-acid chain: Nucleoside diphosphate kinase (137 aa).

6 residues coordinate ATP: K9, F57, R85, T91, R102, and N112. Residue H115 is the Pros-phosphohistidine intermediate of the active site.

It belongs to the NDK family. In terms of assembly, homotetramer. It depends on Mg(2+) as a cofactor.

The protein localises to the cytoplasm. The catalysed reaction is a 2'-deoxyribonucleoside 5'-diphosphate + ATP = a 2'-deoxyribonucleoside 5'-triphosphate + ADP. It carries out the reaction a ribonucleoside 5'-diphosphate + ATP = a ribonucleoside 5'-triphosphate + ADP. Functionally, major role in the synthesis of nucleoside triphosphates other than ATP. The ATP gamma phosphate is transferred to the NDP beta phosphate via a ping-pong mechanism, using a phosphorylated active-site intermediate. The protein is Nucleoside diphosphate kinase of Geobacter sp. (strain M21).